A 778-amino-acid chain; its full sequence is MGEEDTKVIVEPTANGTSSLQKTSDAISGKEVQENASGKEVQESKKEEDTGLEKMEIDDEGKQHEGESETGDKEVEVTEEEKKDVGEDKEQPEADKMDEDTDDKNLKADDGVSGVATEEDAVMKESVESADNKDAENPEGEQEKESKEEKLEGGKANGNEEGDTEEKLVGGDKGDDVDEAEKVENVDEDDKEEALKEKNEAELAEEEETNKGEEVKEANKEDDVEADTKVAEPEVEDKKTESKDENEDKEEEKEDEKEESMDDKEDEKEESNDDDKEDEKEESNDDKEDKKEDIKKSNKRGKGKTEKTRGKTKSDEEKKDIEPKTPFFSDRPVRERKSVERLVAVVDKDSSREFHVEKGKGTPLKDIPNVAYKVSRKKSDEVFKQLHTILFGGKRVKATQLKAHILRFSGYKWQGDEEKAKLKVKEKFEKINKEKLLEFCDLFDISVAKATTKKEDIVTKLVEFLEKPHATTDVLVNEKEKGVKRKRTPKKSSPAAGSSSSKRSAKSQKKTEEATRTNKKSVAHSDDESEEEKEDDEEEEKEQEVEEEEEENENGIPDKSEDEAPQLSESEENVESEEESEEETKKKKRGSRTSSDKKESAGKSRSKKTAVPTKSSPPKKATQKRSAGKRKKSDDDSDTSPKASSKRKKTEKPAKEQAAAPLKSVSKEKPVIGKRGGKGKDKNKEPSDEELKTAIIDILKGVDFNTATFTDILKRLDAKFNISLASKKSSIKRMIQDELTKLADEAEDEEGEEEDAEHEEEEEKEKAKGSGGGEEVKA.

Disordered stretches follow at residues 1 to 334 (MGEE…RPVR) and 475 to 689 (LVNE…PSDE). Positions 14-26 (ANGTSSLQKTSDA) are enriched in polar residues. Basic and acidic residues-rich tracts occupy residues 40–95 (EVQE…PEAD), 121–153 (AVMK…KLEG), 165–185 (EEKL…KVEN), and 209–243 (TNKG…TESK). The stretch at 191–300 (KEEALKEKNE…KEDIKKSNKR (110 aa)) forms a coiled coil. Over residues 244 to 286 (DENEDKEEEKEDEKEESMDDKEDEKEESNDDDKEDEKEESNDD) the composition is skewed to acidic residues. Basic and acidic residues-rich tracts occupy residues 287–296 (KEDKKEDIKK) and 303–323 (GKTE…DIEP). The short motif at 289–296 (DKKEDIKK) is the Nuclear localization signal 1 element. The short motif at 489–496 (PKKSSPAA) is the Nuclear localization signal 2 element. Over residues 491 to 502 (KSSPAAGSSSSK) the composition is skewed to low complexity. Residues 526–587 (DDESEEEKED…EESEEETKKK (62 aa)) are a coiled coil. 2 stretches are compositionally biased toward acidic residues: residues 527 to 553 (DESE…EENE) and 560 to 582 (SEDE…ESEE). The Nuclear localization signal 3 signature appears at 618 to 625 (PKKATQKR). Basic residues predominate over residues 621–631 (ATQKRSAGKRK). Basic and acidic residues predominate over residues 678 to 689 (KGKDKNKEPSDE). Positions 685–740 (EPSDEELKTAIIDILKGVDFNTATFTDILKRLDAKFNISLASKKSSIKRMIQDELT) constitute a DEK-C domain. DNA-binding regions lie at residues 703 to 717 (DFNT…KRLD) and 732 to 736 (KRMIQ). Residues 732 to 766 (KRMIQDELTKLADEAEDEEGEEEDAEHEEEEEKEK) adopt a coiled-coil conformation. The segment at 741 to 778 (KLADEAEDEEGEEEDAEHEEEEEKEKAKGSGGGEEVKA) is disordered. Over residues 745 to 763 (EAEDEEGEEEDAEHEEEEE) the composition is skewed to acidic residues. The segment covering 764–778 (KEKAKGSGGGEEVKA) has biased composition (basic and acidic residues).

Interacts with DEK3.

Its subcellular location is the nucleus. The protein resides in the nucleolus. Functionally, chromatin-associated protein which contributes to the modulation of chromatin structure (such as super-helical structure of DNA) and function. Binds to chromatin of protein-coding genes throughout the genome to regulate nucleosome occupancy and chromatin accessibility, and to modulate the expression of target genes. The chain is DEK domain-containing chromatin-associated protein 4 from Arabidopsis thaliana (Mouse-ear cress).